The primary structure comprises 524 residues: Phosphoenolpyruvate carboxykinase (ATP) (524 aa).

3 residues coordinate substrate: R52, Y188, and K194. ATP contacts are provided by residues K194, H213, and 229-237 (GLSGTGKTT). Mn(2+) is bound by residues K194 and H213. A Mn(2+)-binding site is contributed by D250. Residues E278, R314, and T439 each coordinate ATP. Residue R314 coordinates substrate.

The protein belongs to the phosphoenolpyruvate carboxykinase (ATP) family. Requires Mn(2+) as cofactor.

The protein localises to the cytoplasm. The enzyme catalyses oxaloacetate + ATP = phosphoenolpyruvate + ADP + CO2. Its pathway is carbohydrate biosynthesis; gluconeogenesis. Its function is as follows. Involved in the gluconeogenesis. Catalyzes the conversion of oxaloacetate (OAA) to phosphoenolpyruvate (PEP) through direct phosphoryl transfer between the nucleoside triphosphate and OAA. This is Phosphoenolpyruvate carboxykinase (ATP) from Campylobacter jejuni (strain RM1221).